A 336-amino-acid polypeptide reads, in one-letter code: Ribose-phosphate pyrophosphokinase 1 (336 aa).

The Mg(2+) site is built by Asp-150, His-152, Asp-161, and Asp-165. Residues 236–251 (GKVAVMVDDMIDTAGT) form a binding of phosphoribosylpyrophosphate region.

It belongs to the ribose-phosphate pyrophosphokinase family.

It catalyses the reaction D-ribose 5-phosphate + ATP = 5-phospho-alpha-D-ribose 1-diphosphate + AMP + H(+). This Spinacia oleracea (Spinach) protein is Ribose-phosphate pyrophosphokinase 1 (PRS1).